The primary structure comprises 67 residues: Large ribosomal subunit protein uL29 (67 aa).

It belongs to the universal ribosomal protein uL29 family.

The sequence is that of Large ribosomal subunit protein uL29 from Sulfurihydrogenibium sp. (strain YO3AOP1).